Here is a 92-residue protein sequence, read N- to C-terminus: Small ribosomal subunit protein uS19c (92 aa).

Belongs to the universal ribosomal protein uS19 family.

The protein resides in the plastid. Its subcellular location is the chloroplast. Protein S19 forms a complex with S13 that binds strongly to the 16S ribosomal RNA. The sequence is that of Small ribosomal subunit protein uS19c from Cycas taitungensis (Prince sago).